A 627-amino-acid polypeptide reads, in one-letter code: E3 ubiquitin-protein ligase DTX1 (627 aa).

WWE domains lie at 14 to 94 (GLGF…PVRR) and 95 to 171 (NFYD…RLRR). Disordered stretches follow at residues 222-254 (QRRK…ALVV), 269-327 (PATG…ALPV), and 368-398 (PPVS…KSKN). Composition is skewed to pro residues over residues 230–248 (PAAP…PGGP) and 275–287 (EPAP…PRSP). The SH3-binding signature appears at 240-243 (PPPL). Residues 296–314 (PGQNNLSRPGPQRSTSVSA) show a composition bias toward polar residues. Over residues 386-396 (RKTKKKHLKKS) the composition is skewed to basic residues. The RING-type zinc-finger motif lies at 418-479 (CTICMERLVT…DGSLQCPTCK (62 aa)).

It belongs to the Deltex family. In terms of assembly, homodimer. May form a heterodimer with other members of the Deltex family. Interacts with NOTCH1 via its N-terminal region and EIF3F, the interaction is required for NOTCH1 deubiquitination. Interacts with EP300. Forms a heterodimer with BBAP; the heterodimerization leading to an increase of in vitro ubiquitin ligase activity. Interacts with ITCH. In terms of processing, ubiquitinated; undergoes 'Lys-29'-linked polyubiquitination catalyzed by ITCH. As to expression, predominantly expressed in the brain and testis. Weakly expressed in the thymus, spleen and ovary. Predominantly expressed in regions containing post-mitotic differentiating neurons.

Its subcellular location is the cytoplasm. The protein resides in the nucleus. It catalyses the reaction S-ubiquitinyl-[E2 ubiquitin-conjugating enzyme]-L-cysteine + [acceptor protein]-L-lysine = [E2 ubiquitin-conjugating enzyme]-L-cysteine + N(6)-ubiquitinyl-[acceptor protein]-L-lysine.. The protein operates within protein modification; protein ubiquitination. In terms of biological role, regulator of Notch signaling, a signaling pathway involved in cell-cell communications that regulates a broad spectrum of cell-fate determinations. Mainly acts as a positive regulator of Notch, but it also acts as a negative regulator, depending on the developmental and cell context. Mediates the antineural activity of Notch, possibly by inhibiting the transcriptional activation mediated by MATCH1. Involved in neurogenesis, lymphogenesis and myogenesis, and may also be involved in MZB (Marginal zone B) cell differentiation. Promotes B-cell development at the expense of T-cell development, suggesting that it can antagonize NOTCH1. Functions as an ubiquitin ligase protein in vivo, mediating ubiquitination and promoting degradation of MEKK1, suggesting that it may regulate the Notch pathway via some ubiquitin ligase activity. This Mus musculus (Mouse) protein is E3 ubiquitin-protein ligase DTX1 (Dtx1).